Here is a 248-residue protein sequence, read N- to C-terminus: MNQVLTETRPIRLKGRSFLAMVLSPELPLDGWLERLDDLARRSSGFFLGRPVVLDMENLAIERAQLVYLLQALNDRGVWIMGVEGARPSLLGPGMPPAMRGGQPAADFEAPAGEPQANPGAPEPQISQAVRAPGHAVHAMPSMVITEPVRSGQSVYFPEGDVTIVGSVASGAEVVAGGSIHIYGTLRGRALAGTAGNTSARIFCRKLEAELVAIDGLYKTAEDLEPRFRGQAVQLWLDGDYMMIDTLS.

Positions 94-125 (GMPPAMRGGQPAADFEAPAGEPQANPGAPEPQ) are disordered.

It belongs to the MinC family. As to quaternary structure, interacts with MinD and FtsZ.

Functionally, cell division inhibitor that blocks the formation of polar Z ring septums. Rapidly oscillates between the poles of the cell to destabilize FtsZ filaments that have formed before they mature into polar Z rings. Prevents FtsZ polymerization. This chain is Probable septum site-determining protein MinC, found in Brucella abortus (strain S19).